The chain runs to 120 residues: uncharacterized protein (120 aa).

Residues 19–41 (YPELFITWCVMTYTFGVAGYMLG) form a helical membrane-spanning segment. Residues 57–78 (SKNAHPWEDTKSSSGKSDESLD) are disordered. Over residues 61–75 (HPWEDTKSSSGKSDE) the composition is skewed to basic and acidic residues.

Its subcellular location is the membrane. This is an uncharacterized protein from Schizosaccharomyces pombe (strain 972 / ATCC 24843) (Fission yeast).